A 1178-amino-acid polypeptide reads, in one-letter code: F-box/WD repeat-containing protein A-like protein (1178 aa).

Residues M1 to K208 enclose the START domain. Disordered regions lie at residues K223–E296, S569–I594, and S618–S649. Low complexity-rich tracts occupy residues N229–N293 and I571–N580. Residues C717 to L763 enclose the F-box domain. The segment at K804–L841 is disordered. Over residues S809–S820 the composition is skewed to low complexity. Pro residues predominate over residues P821–Q835. WD repeat units lie at residues G886–T923, R925–E979, R981–M1017, I1020–V1059, G1062–H1100, S1104–L1141, and N1146–K1178.

Functionally, substrate recognition component of a SCF (SKP1-CUL1-F-box protein) E3 ubiquitin-protein ligase complex which mediates the ubiquitination and subsequent proteasomal degradation of target proteins. In Dictyostelium discoideum (Social amoeba), this protein is F-box/WD repeat-containing protein A-like protein.